A 266-amino-acid polypeptide reads, in one-letter code: N-formylglutamate deformylase (266 aa).

The protein belongs to the N-formylglutamate deformylase family. As to quaternary structure, monomer.

The enzyme catalyses N-formyl-L-glutamate + H2O = formate + L-glutamate. It participates in amino-acid degradation; L-histidine degradation into L-glutamate; L-glutamate from N-formimidoyl-L-glutamate (deiminase route): step 2/2. In terms of biological role, catalyzes the hydrolysis of N-formyl-L-glutamate to formate and L-glutamate. Shows weak activity with N-formyl-L-glutamine. This is N-formylglutamate deformylase from Pseudomonas aeruginosa (strain ATCC 15692 / DSM 22644 / CIP 104116 / JCM 14847 / LMG 12228 / 1C / PRS 101 / PAO1).